A 434-amino-acid polypeptide reads, in one-letter code: uncharacterized protein (434 aa).

11 consecutive transmembrane segments (helical) span residues 50 to 70 (GSIA…SFTL), 72 to 92 (TGLL…VLAI), 95 to 115 (LMAF…LLPV), 135 to 155 (SPVV…QFGW), 158 to 178 (SLIA…YFPH), 179 to 199 (LNPE…IAIT), 229 to 249 (LPYI…KIFA), 288 to 308 (GFVP…VAGF), 319 to 339 (PNPM…VLLL), 376 to 396 (IFAA…AIYF), and 412 to 432 (VVAV…GLFV).

The protein resides in the cell membrane. This is an uncharacterized protein from Escherichia coli (strain K12).